The primary structure comprises 492 residues: Fibroblast growth factor receptor substrate 3 (492 aa).

A lipid anchor (N-myristoyl glycine) is attached at glycine 2. In terms of domain architecture, IRS-type PTB spans 13–115 (VPDNHPTKFK…QCNSINVMEE (103 aa)). Disordered stretches follow at residues 153-173 (GEGP…RHPS), 338-455 (QLGG…SDSY), and 467-492 (SNLQ…DLPL).

In terms of assembly, binds NTRK1. Binds FGFR1, NGFR, GRB2, PTPN11 and ERK2. In terms of processing, phosphorylated by ULK2 in vitro. Phosphorylated on tyrosine residues upon stimulation by BFGF or NGFB.

The protein resides in the membrane. Its function is as follows. Adapter protein that links FGF and NGF receptors to downstream signaling pathways. Involved in the activation of MAP kinases. Down-regulates ERK2 signaling by interfering with the phosphorylation and nuclear translocation of ERK2. The protein is Fibroblast growth factor receptor substrate 3 (FRS3) of Homo sapiens (Human).